A 120-amino-acid polypeptide reads, in one-letter code: Chaperonin GroEL (120 aa).

Residue 23 to 27 (DGTTT) coordinates ATP.

This sequence belongs to the chaperonin (HSP60) family. In terms of assembly, forms a cylinder of 14 subunits composed of two heptameric rings stacked back-to-back. Interacts with the co-chaperonin GroES.

It is found in the cytoplasm. It carries out the reaction ATP + H2O + a folded polypeptide = ADP + phosphate + an unfolded polypeptide.. In terms of biological role, together with its co-chaperonin GroES, plays an essential role in assisting protein folding. The GroEL-GroES system forms a nano-cage that allows encapsulation of the non-native substrate proteins and provides a physical environment optimized to promote and accelerate protein folding. This chain is Chaperonin GroEL, found in Mycolicibacter nonchromogenicus (Mycobacterium nonchromogenicum).